We begin with the raw amino-acid sequence, 241 residues long: MNRCWALFLPLCCYLRLVSAEGDPIPEELYEMLSDHSIRSFDDLQRLLHRDSVDEDGAELDLNMTRAHSGVELESSSRGRRSLGSLAAAEPAVIAECKTRTEVFQISRNLIDRTNANFLVWPPCVEVQRCSGCCNNRNVQCRASQVQMRPVQVRKIEIVRKKPIFKKATVTLEDHLACKCETIVTPRPVTRSPGTSREQRAKTPQARVTIRTVRIRRPPKGKHRKFKHTHDKAALKETLGA.

An N-terminal signal peptide occupies residues 1-20; sequence MNRCWALFLPLCCYLRLVSA. Residues 21–81 constitute a propeptide, removed in mature form; sequence EGDPIPEELY…ELESSSRGRR (61 aa). N-linked (GlcNAc...) asparagine glycosylation occurs at asparagine 63. Intrachain disulfides connect cysteine 97-cysteine 141, cysteine 130-cysteine 178, and cysteine 134-cysteine 180. Positions 191 to 241 are cleaved as a propeptide — removed in mature form; that stretch reads RSPGTSREQRAKTPQARVTIRTVRIRRPPKGKHRKFKHTHDKAALKETLGA. The segment covering 217–230 has biased composition (basic residues); the sequence is RPPKGKHRKFKHTH. The interval 217 to 241 is disordered; that stretch reads RPPKGKHRKFKHTHDKAALKETLGA.

Belongs to the PDGF/VEGF growth factor family. As to quaternary structure, antiparallel homodimer; disulfide-linked. Antiparallel heterodimer with PDGFA; disulfide-linked. The PDGFB homodimer interacts with PDGFRA and PDGFRB homodimers, and with heterodimers formed by PDGFRA and PDGFRB. The heterodimer composed of PDGFA and PDGFB interacts with PDGFRB homodimers, and with heterodimers formed by PDGFRA and PDGFRB. Interacts with XLKD1. Interacts with LRP1. Interacts with SORL1 (via the N-terminal ectodomain). Interacts with CD82; this interaction inhibits PDGFB-mediated signaling pathway. As to expression, localized to vascular smooth muscle cells. Also weakly expressed by cortical interstitial cells but absent in tubules. Up-regulated in areas of renal fibrosis. In mice with unilateral ureteral obstruction, an increased expression in interstitial cells and in some tubules observed after day 4.

Its subcellular location is the secreted. Functionally, growth factor that plays an essential role in the regulation of embryonic development, cell proliferation, cell migration, survival and chemotaxis. Potent mitogen for cells of mesenchymal origin. Required for normal proliferation and recruitment of pericytes and vascular smooth muscle cells in the central nervous system, skin, lung, heart and placenta. Required for normal blood vessel development, and for normal development of kidney glomeruli. Plays an important role in wound healing. Signaling is modulated by the formation of heterodimers with PDGFA. The chain is Platelet-derived growth factor subunit B (Pdgfb) from Mus musculus (Mouse).